A 243-amino-acid chain; its full sequence is Pyridoxine 5'-phosphate synthase (243 aa).

3-amino-2-oxopropyl phosphate is bound at residue N9. Residue 11–12 (DH) coordinates 1-deoxy-D-xylulose 5-phosphate. Residue R20 coordinates 3-amino-2-oxopropyl phosphate. The active-site Proton acceptor is the H45. 1-deoxy-D-xylulose 5-phosphate is bound by residues R47 and H52. The Proton acceptor role is filled by E72. T102 is a 1-deoxy-D-xylulose 5-phosphate binding site. H193 functions as the Proton donor in the catalytic mechanism. 3-amino-2-oxopropyl phosphate-binding positions include G194 and 215–216 (GH).

It belongs to the PNP synthase family. As to quaternary structure, homooctamer; tetramer of dimers.

The protein localises to the cytoplasm. The enzyme catalyses 3-amino-2-oxopropyl phosphate + 1-deoxy-D-xylulose 5-phosphate = pyridoxine 5'-phosphate + phosphate + 2 H2O + H(+). It functions in the pathway cofactor biosynthesis; pyridoxine 5'-phosphate biosynthesis; pyridoxine 5'-phosphate from D-erythrose 4-phosphate: step 5/5. In terms of biological role, catalyzes the complicated ring closure reaction between the two acyclic compounds 1-deoxy-D-xylulose-5-phosphate (DXP) and 3-amino-2-oxopropyl phosphate (1-amino-acetone-3-phosphate or AAP) to form pyridoxine 5'-phosphate (PNP) and inorganic phosphate. The sequence is that of Pyridoxine 5'-phosphate synthase from Pectobacterium atrosepticum (strain SCRI 1043 / ATCC BAA-672) (Erwinia carotovora subsp. atroseptica).